A 1171-amino-acid chain; its full sequence is DNA-directed RNA polymerase subunit beta (1171 aa).

It belongs to the RNA polymerase beta chain family. In terms of assembly, the RNAP catalytic core consists of 2 alpha, 1 beta, 1 beta' and 1 omega subunit. When a sigma factor is associated with the core the holoenzyme is formed, which can initiate transcription.

The enzyme catalyses RNA(n) + a ribonucleoside 5'-triphosphate = RNA(n+1) + diphosphate. Its function is as follows. DNA-dependent RNA polymerase catalyzes the transcription of DNA into RNA using the four ribonucleoside triphosphates as substrates. The chain is DNA-directed RNA polymerase subunit beta from Arthrobacter sp. (strain FB24).